The sequence spans 462 residues: Phosphoglucosamine mutase (462 aa).

The active-site Phosphoserine intermediate is Ser112. The Mg(2+) site is built by Ser112, Asp250, Asp252, and Asp254. Ser112 carries the post-translational modification Phosphoserine.

This sequence belongs to the phosphohexose mutase family. It depends on Mg(2+) as a cofactor. In terms of processing, activated by phosphorylation.

The enzyme catalyses alpha-D-glucosamine 1-phosphate = D-glucosamine 6-phosphate. Catalyzes the conversion of glucosamine-6-phosphate to glucosamine-1-phosphate. In Parasynechococcus marenigrum (strain WH8102), this protein is Phosphoglucosamine mutase.